We begin with the raw amino-acid sequence, 150 residues long: UPF0506 protein SJCHGC03144 (150 aa).

The N-terminal stretch at 1 to 18 (MNTCIQLLILCLVTVINS) is a signal peptide. N-linked (GlcNAc...) asparagine glycosylation is found at N20, N36, N52, and N110. Intrachain disulfides connect C116–C130, C123–C134, and C129–C139.

The protein belongs to the UPF0506 family.

It localises to the secreted. The sequence is that of UPF0506 protein SJCHGC03144 from Schistosoma japonicum (Blood fluke).